A 359-amino-acid polypeptide reads, in one-letter code: 4-hydroxy-3-methylbut-2-en-1-yl diphosphate synthase (flavodoxin) (359 aa).

4 residues coordinate [4Fe-4S] cluster: Cys-263, Cys-266, Cys-298, and Glu-305.

This sequence belongs to the IspG family. It depends on [4Fe-4S] cluster as a cofactor.

The enzyme catalyses (2E)-4-hydroxy-3-methylbut-2-enyl diphosphate + oxidized [flavodoxin] + H2O + 2 H(+) = 2-C-methyl-D-erythritol 2,4-cyclic diphosphate + reduced [flavodoxin]. The protein operates within isoprenoid biosynthesis; isopentenyl diphosphate biosynthesis via DXP pathway; isopentenyl diphosphate from 1-deoxy-D-xylulose 5-phosphate: step 5/6. In terms of biological role, converts 2C-methyl-D-erythritol 2,4-cyclodiphosphate (ME-2,4cPP) into 1-hydroxy-2-methyl-2-(E)-butenyl 4-diphosphate. The chain is 4-hydroxy-3-methylbut-2-en-1-yl diphosphate synthase (flavodoxin) from Wolinella succinogenes (strain ATCC 29543 / DSM 1740 / CCUG 13145 / JCM 31913 / LMG 7466 / NCTC 11488 / FDC 602W) (Vibrio succinogenes).